The chain runs to 93 residues: DNA-directed RNA polymerase subunit omega (93 aa).

Belongs to the RNA polymerase subunit omega family. As to quaternary structure, the RNAP catalytic core consists of 2 alpha, 1 beta, 1 beta' and 1 omega subunit. When a sigma factor is associated with the core the holoenzyme is formed, which can initiate transcription.

It catalyses the reaction RNA(n) + a ribonucleoside 5'-triphosphate = RNA(n+1) + diphosphate. Promotes RNA polymerase assembly. Latches the N- and C-terminal regions of the beta' subunit thereby facilitating its interaction with the beta and alpha subunits. The chain is DNA-directed RNA polymerase subunit omega from Glaesserella parasuis serovar 5 (strain SH0165) (Haemophilus parasuis).